The chain runs to 144 residues: 3-dehydroquinate dehydratase (144 aa).

Tyr22 (proton acceptor) is an active-site residue. Substrate-binding residues include Asn74, His80, and Asp87. His100 serves as the catalytic Proton donor. Substrate contacts are provided by residues 101–102 (LS) and Arg111.

It belongs to the type-II 3-dehydroquinase family. Homododecamer.

The catalysed reaction is 3-dehydroquinate = 3-dehydroshikimate + H2O. It participates in metabolic intermediate biosynthesis; chorismate biosynthesis; chorismate from D-erythrose 4-phosphate and phosphoenolpyruvate: step 3/7. Functionally, catalyzes a trans-dehydration via an enolate intermediate. The sequence is that of 3-dehydroquinate dehydratase from Clostridium perfringens (strain ATCC 13124 / DSM 756 / JCM 1290 / NCIMB 6125 / NCTC 8237 / Type A).